The sequence spans 413 residues: Cardiolipin synthase B (413 aa).

PLD phosphodiesterase domains follow at residues 108 to 135 and 285 to 312; these read VFRRMHRKIVVIDARIAFIGGLNYSAEH and RRRPLHGKVALMDDHWATVGSSNLDPLS. Catalysis depends on residues histidine 113, lysine 115, aspartate 120, histidine 290, lysine 292, and aspartate 297. Residues 390–413 are disordered; sequence VGPPAQPTMETQDRVETENTGVKP.

It belongs to the phospholipase D family. Cardiolipin synthase subfamily. ClsB sub-subfamily.

The protein localises to the cell membrane. The catalysed reaction is 2 a 1,2-diacyl-sn-glycero-3-phospho-(1'-sn-glycerol) = a cardiolipin + glycerol. Its function is as follows. Catalyzes the phosphatidyl group transfer from one phosphatidylglycerol molecule to another to form cardiolipin (CL) (diphosphatidylglycerol) and glycerol. This is Cardiolipin synthase B from Escherichia coli O6:H1 (strain CFT073 / ATCC 700928 / UPEC).